The chain runs to 427 residues: 3-phosphoshikimate 1-carboxyvinyltransferase (427 aa).

3-phosphoshikimate-binding residues include lysine 22, serine 23, and arginine 27. Residue lysine 22 participates in phosphoenolpyruvate binding. Positions 96 and 124 each coordinate phosphoenolpyruvate. 3-phosphoshikimate contacts are provided by serine 169, serine 170, glutamine 171, serine 197, aspartate 313, asparagine 336, and lysine 340. Glutamine 171 provides a ligand contact to phosphoenolpyruvate. The Proton acceptor role is filled by aspartate 313. Phosphoenolpyruvate contacts are provided by arginine 344, arginine 386, and lysine 411.

The protein belongs to the EPSP synthase family. In terms of assembly, monomer.

The protein localises to the cytoplasm. The enzyme catalyses 3-phosphoshikimate + phosphoenolpyruvate = 5-O-(1-carboxyvinyl)-3-phosphoshikimate + phosphate. The protein operates within metabolic intermediate biosynthesis; chorismate biosynthesis; chorismate from D-erythrose 4-phosphate and phosphoenolpyruvate: step 6/7. Catalyzes the transfer of the enolpyruvyl moiety of phosphoenolpyruvate (PEP) to the 5-hydroxyl of shikimate-3-phosphate (S3P) to produce enolpyruvyl shikimate-3-phosphate and inorganic phosphate. This Klebsiella pneumoniae subsp. pneumoniae (strain ATCC 700721 / MGH 78578) protein is 3-phosphoshikimate 1-carboxyvinyltransferase.